A 186-amino-acid chain; its full sequence is Alkyl hydroperoxide reductase AhpD (186 aa).

Cysteine 132 (proton donor) is an active-site residue. Cysteine 132 and cysteine 135 form a disulfide bridge. Residue cysteine 135 is the Cysteine sulfenic acid (-SOH) intermediate of the active site.

The protein belongs to the AhpD family.

The catalysed reaction is N(6)-[(R)-dihydrolipoyl]-L-lysyl-[lipoyl-carrier protein] + a hydroperoxide = N(6)-[(R)-lipoyl]-L-lysyl-[lipoyl-carrier protein] + an alcohol + H2O. Its function is as follows. Antioxidant protein with alkyl hydroperoxidase activity. Required for the reduction of the AhpC active site cysteine residues and for the regeneration of the AhpC enzyme activity. This is Alkyl hydroperoxide reductase AhpD from Anaeromyxobacter sp. (strain K).